Here is a 1031-residue protein sequence, read N- to C-terminus: Pre-mRNA-splicing factor SYF1 (1031 aa).

4 HAT repeats span residues 28 to 60, 90 to 122, 214 to 248, and 250 to 269; these read HLIPSADLPVEEDLLHNPENLRSWLSYIHNVKE, DGLQRLVSIYERAIAVFPTSYKLWKAYYLTRQS, KNGSYARRAFDRALRTLPPSLHGRVWGLYLRWAEI, and GGDAGERVWRRYLKVDPSLT. The segment at 346 to 368 is disordered; sequence VEEKVDGEQPQVEGQEQQPQEEP. A compositionally biased stretch (low complexity) spans 353–368; it reads EQPQVEGQEQQPQEEP. HAT repeat units follow at residues 452 to 487, 610 to 646, 664 to 698, 700 to 732, 734 to 768, 773 to 807, 845 to 879, and 881 to 915; these read GEFERATATFERGLAAVVTIRDFTQIFDAYAEFSET, PDLEQARKIFERATKVPFKAVDELAEVWCEWAEMELR, PKNTKINYYDDNIPPQSRLFKSLKLWSYYSDLEES, GTVESTKAVYDKIMELKIANAQVIVNYATFLEE, KYFEESFKVYERGIELFHFPIAFEIWNIYLSKFVK, KKLERARDLFEQALENCPEKFCKPLYLMYAKLEEE, FGLPATRPIYERALESLPDKQTAEMCRRFARMERK, and GEIDRARAIYAHASQFCDPRIEPEFWQEWNDFEIE. 2 disordered regions span residues 948 to 969 and 1003 to 1031; these read AAASKGTEKPTDTSAQEAQDAA and TNANGIDEGGEETGEMANPDAIVMDEDEF.

The protein belongs to the crooked-neck family. As to quaternary structure, associated with the spliceosome.

It localises to the nucleus. In terms of biological role, involved in pre-mRNA splicing and cell cycle progression. The protein is Pre-mRNA-splicing factor SYF1 (SYF1) of Cryptococcus neoformans var. neoformans serotype D (strain B-3501A) (Filobasidiella neoformans).